We begin with the raw amino-acid sequence, 110 residues long: MQAALEVTARYCSRELDQYGQCVAAKPESWHRDCHHLKMSIARCTSSHPIIRQIRQACAEPFEAFEKCLRLNEAAVGNCAEHMRRFLQCAEQVQPPSSPTTGEAQPLPAS.

Residue M1 is modified to N-acetylmethionine. 2 consecutive CHCH domains span residues 9–52 (ARYC…PIIR) and 55–97 (RQAC…QPPS). 4 short sequence motifs (cx9C motif) span residues 12 to 22 (CSRELDQYGQC), 34 to 44 (CHHLKMSIARC), 58 to 68 (CAEPFEAFEKC), and 79 to 89 (CAEHMRRFLQC). 4 disulfides stabilise this stretch: C12-C44, C22-C34, C58-C89, and C68-C79.

In terms of assembly, monomer.

It is found in the mitochondrion intermembrane space. This is Coiled-coil-helix-coiled-coil-helix domain-containing protein 5 (Chchd5) from Mus musculus (Mouse).